A 315-amino-acid polypeptide reads, in one-letter code: tRNA pseudouridine synthase B (315 aa).

The active-site Nucleophile is the D54.

The protein belongs to the pseudouridine synthase TruB family. Type 1 subfamily.

The catalysed reaction is uridine(55) in tRNA = pseudouridine(55) in tRNA. In terms of biological role, responsible for synthesis of pseudouridine from uracil-55 in the psi GC loop of transfer RNAs. The chain is tRNA pseudouridine synthase B from Cupriavidus pinatubonensis (strain JMP 134 / LMG 1197) (Cupriavidus necator (strain JMP 134)).